The sequence spans 309 residues: Homoserine kinase (309 aa).

ATP is bound at residue 91 to 101 (PIGSGLGSSAC).

This sequence belongs to the GHMP kinase family. Homoserine kinase subfamily.

Its subcellular location is the cytoplasm. The enzyme catalyses L-homoserine + ATP = O-phospho-L-homoserine + ADP + H(+). It participates in amino-acid biosynthesis; L-threonine biosynthesis; L-threonine from L-aspartate: step 4/5. In terms of biological role, catalyzes the ATP-dependent phosphorylation of L-homoserine to L-homoserine phosphate. In Buchnera aphidicola subsp. Acyrthosiphon pisum (strain APS) (Acyrthosiphon pisum symbiotic bacterium), this protein is Homoserine kinase.